A 569-amino-acid polypeptide reads, in one-letter code: Pyruvate decarboxylase (569 aa).

Residues D38 and H124 each coordinate pyruvate. Residues T398 and 421–423 (GSI) contribute to the thiamine diphosphate site. D451 provides a ligand contact to Mg(2+). Thiamine diphosphate is bound by residues 452–453 (GS) and 478–483 (NQGYTI). N478 and G480 together coordinate Mg(2+). Position 484 (E484) interacts with pyruvate.

Belongs to the TPP enzyme family. Homotetramer. It depends on Mg(2+) as a cofactor. Thiamine diphosphate serves as cofactor.

The enzyme catalyses a 2-oxocarboxylate + H(+) = an aldehyde + CO2. It carries out the reaction pyruvate + H(+) = acetaldehyde + CO2. The polypeptide is Pyruvate decarboxylase (pdcA) (Aspergillus terreus (strain NIH 2624 / FGSC A1156)).